The sequence spans 300 residues: UDP-N-acetylenolpyruvoylglucosamine reductase (300 aa).

The region spanning 30–194 (KVGGPADFFA…LAAVFSLAAG (165 aa)) is the FAD-binding PCMH-type domain. Arg174 is an active-site residue. Residue Ser223 is the Proton donor of the active site. The active site involves Glu293.

It belongs to the MurB family. Requires FAD as cofactor.

The protein resides in the cytoplasm. It carries out the reaction UDP-N-acetyl-alpha-D-muramate + NADP(+) = UDP-N-acetyl-3-O-(1-carboxyvinyl)-alpha-D-glucosamine + NADPH + H(+). The protein operates within cell wall biogenesis; peptidoglycan biosynthesis. In terms of biological role, cell wall formation. The chain is UDP-N-acetylenolpyruvoylglucosamine reductase from Geotalea uraniireducens (strain Rf4) (Geobacter uraniireducens).